Consider the following 117-residue polypeptide: uncharacterized protein (117 aa).

The protein localises to the mitochondrion. This is an uncharacterized protein from Arabidopsis thaliana (Mouse-ear cress).